The following is a 126-amino-acid chain: Glycine cleavage system H protein (126 aa).

The Lipoyl-binding domain occupies 24-105 (TLTVGITDHA…AYGVWLFKIK (82 aa)). K65 is modified (N6-lipoyllysine).

This sequence belongs to the GcvH family. As to quaternary structure, the glycine cleavage system is composed of four proteins: P, T, L and H. (R)-lipoate is required as a cofactor.

The glycine cleavage system catalyzes the degradation of glycine. The H protein shuttles the methylamine group of glycine from the P protein to the T protein. The polypeptide is Glycine cleavage system H protein (Burkholderia cenocepacia (strain HI2424)).